The sequence spans 167 residues: Photosystem I assembly protein Ycf3 (167 aa).

3 TPR repeats span residues A35–A68, S72–L105, and G120–N153.

The protein belongs to the Ycf3 family.

It is found in the plastid. The protein localises to the chloroplast thylakoid membrane. In terms of biological role, essential for the assembly of the photosystem I (PSI) complex. May act as a chaperone-like factor to guide the assembly of the PSI subunits. In Pleurastrum terricola (Filamentous green alga), this protein is Photosystem I assembly protein Ycf3.